We begin with the raw amino-acid sequence, 172 residues long: Large ribosomal subunit protein uL10 (172 aa).

This sequence belongs to the universal ribosomal protein uL10 family. In terms of assembly, part of the ribosomal stalk of the 50S ribosomal subunit. The N-terminus interacts with L11 and the large rRNA to form the base of the stalk. The C-terminus forms an elongated spine to which L12 dimers bind in a sequential fashion forming a multimeric L10(L12)X complex.

In terms of biological role, forms part of the ribosomal stalk, playing a central role in the interaction of the ribosome with GTP-bound translation factors. In Caulobacter vibrioides (strain ATCC 19089 / CIP 103742 / CB 15) (Caulobacter crescentus), this protein is Large ribosomal subunit protein uL10 (rplJ).